Here is a 369-residue protein sequence, read N- to C-terminus: C-C chemokine receptor type 9 (369 aa).

Over 1-48 the chain is Extracellular; the sequence is MMPTELTSLIPGMFDDFSYDSTASTDDYMNLNFSSFFCKKNNVRQFAS. A glycan (N-linked (GlcNAc...) asparagine) is linked at Asn-32. Cystine bridges form between Cys-38-Cys-289 and Cys-119-Cys-198. The helical transmembrane segment at 49 to 74 threads the bilayer; it reads HFLPPLYWLVFIVGTLGNSLVILVYW. At 75 to 85 the chain is on the cytoplasmic side; it reads YCTRVKTMTDM. A helical transmembrane segment spans residues 86–109; it reads FLLNLAIADLLFLATLPFWAIAAA. The Extracellular portion of the chain corresponds to 110–120; that stretch reads GQWMFQTFMCK. The chain crosses the membrane as a helical span at residues 121 to 150; the sequence is VVNSMYKMNFYSCVLLIMCISVDRYIAIVQ. Residues 151–159 are Cytoplasmic-facing; the sequence is AMKAQVWRQ. The chain crosses the membrane as a helical span at residues 160–185; sequence KRLLYSKMVCITIWVMAAVLCTPEIL. The Extracellular portion of the chain corresponds to 186 to 208; it reads YSQVSGESGIATCTMVYPKDKNA. The helical transmembrane segment at 209–243 threads the bilayer; sequence KLKSAVLILKVTLGFFLPFMVMAFCYTIIIHTLVQ. Residues 244–248 are Cytoplasmic-facing; that stretch reads AKKSS. The chain crosses the membrane as a helical span at residues 249–283; that stretch reads KHKALKVTITVLTVFIMSQFPYNSILVVQAVDAYA. At 284–290 the chain is on the extracellular side; sequence MFISNCT. The chain crosses the membrane as a helical span at residues 291-321; the sequence is ISTNIDICFQVTQTIAFFHSCLNPVLYVFVG. Over 322 to 369 the chain is Cytoplasmic; sequence ERFRRDLVKTLKNLGCISQAQWVSFTRREGSLKLSSMLLETTSGALSL.

This sequence belongs to the G-protein coupled receptor 1 family. In terms of tissue distribution, highly expressed in the thymus and low in lymph nodes and spleen.

It is found in the cell membrane. Receptor for chemokine SCYA25/TECK. Subsequently transduces a signal by increasing the intracellular calcium ions level. This Mus musculus (Mouse) protein is C-C chemokine receptor type 9 (Ccr9).